The sequence spans 782 residues: Chondroitin proteoglycan 4 (782 aa).

The N-terminal stretch at 1 to 18 is a signal peptide; sequence MRLVYSLIFLLFIPFSHP. N76, N208, N462, N468, N474, and N503 each carry an N-linked (GlcNAc...) asparagine glycan. Positions 513 to 726 are disordered; the sequence is ISEKSTEESS…EDQGSGNYKK (214 aa). 5 stretches are compositionally biased toward low complexity: residues 520–532, 548–566, 573–612, 662–672, and 688–722; these read ESSG…SGDG, SGSS…SSGE, SSGS…SSDT, FGESSGSSGES, and SGSS…QGSG. N559 is a glycosylation site (N-linked (GlcNAc...) asparagine). O-linked (Xyl...) (chondroitin sulfate) serine glycosylation occurs at S691. Residue N699 is glycosylated (N-linked (GlcNAc...) asparagine). O-linked (Xyl...) (chondroitin sulfate) serine glycosylation is found at S701, S704, S708, S714, and S721. The N-linked (GlcNAc...) asparagine glycan is linked to N743.

The chain is Chondroitin proteoglycan 4 from Caenorhabditis elegans.